Here is a 250-residue protein sequence, read N- to C-terminus: Sugar fermentation stimulation protein homolog (250 aa).

It belongs to the SfsA family.

This chain is Sugar fermentation stimulation protein homolog, found in Trichodesmium erythraeum (strain IMS101).